The sequence spans 207 residues: Outer-membrane lipoprotein LolB (207 aa).

An N-terminal signal peptide occupies residues 1–21 (MPMRKRHFYRLLPLASLLLAA). C22 carries N-palmitoyl cysteine lipidation. The S-diacylglycerol cysteine moiety is linked to residue C22.

The protein belongs to the LolB family. Monomer.

The protein resides in the cell outer membrane. In terms of biological role, plays a critical role in the incorporation of lipoproteins in the outer membrane after they are released by the LolA protein. The polypeptide is Outer-membrane lipoprotein LolB (Yersinia pseudotuberculosis serotype IB (strain PB1/+)).